Reading from the N-terminus, the 338-residue chain is Tryptophan--tRNA ligase (338 aa).

Residues 11–13 and 19–20 each bind ATP; these read QPS and GN. The 'HIGH' region signature appears at 12–20; sequence PSGELSIGN. Residue D135 coordinates L-tryptophan. Residues 147–149, V189, and 198–202 each bind ATP; these read GSD and KMSKS. The 'KMSKS' region motif lies at 198 to 202; the sequence is KMSKS.

This sequence belongs to the class-I aminoacyl-tRNA synthetase family. Homodimer.

Its subcellular location is the cytoplasm. It catalyses the reaction tRNA(Trp) + L-tryptophan + ATP = L-tryptophyl-tRNA(Trp) + AMP + diphosphate + H(+). Functionally, catalyzes the attachment of tryptophan to tRNA(Trp). The protein is Tryptophan--tRNA ligase of Vibrio cholerae serotype O1 (strain ATCC 39315 / El Tor Inaba N16961).